The primary structure comprises 444 residues: ATPase PAAT (444 aa).

4 positions are modified to phosphoserine: serine 177, serine 182, serine 254, and serine 302. The segment at 424–444 is disordered; it reads PSPGMPLRHYDSRERLSNGER. Positions 431–444 are enriched in basic and acidic residues; sequence RHYDSRERLSNGER.

In terms of assembly, homodimer. Interacts with ABCB7, ABCB8/MITOSUR and ABCB10.

It is found in the cytoplasm. Its subcellular location is the mitochondrion. The enzyme catalyses ATP + H2O = ADP + phosphate + H(+). Functionally, ATPase that regulates mitochondrial ABC transporters ABCB7, ABCB8/MITOSUR and ABCB10. Regulates mitochondrial ferric concentration and heme biosynthesis and plays a role in the maintenance of mitochondrial homeostasis and cell survival. The protein is ATPase PAAT of Rattus norvegicus (Rat).